A 210-amino-acid chain; its full sequence is Superoxide dismutase [Mn], mitochondrial (210 aa).

Residues His29, His77, Asp164, and His168 each contribute to the Mn(2+) site.

The protein belongs to the iron/manganese superoxide dismutase family. Homotetramer. Mn(2+) is required as a cofactor.

It is found in the mitochondrion matrix. It carries out the reaction 2 superoxide + 2 H(+) = H2O2 + O2. In terms of biological role, destroys superoxide anion radicals which are normally produced within the cells and which are toxic to biological systems. This Aspergillus oryzae (strain ATCC 42149 / RIB 40) (Yellow koji mold) protein is Superoxide dismutase [Mn], mitochondrial (sodB).